The following is a 1210-amino-acid chain: AF4/FMR2 family member 1 (1210 aa).

4 disordered regions span residues 1–45 (MAAQ…GEPY), 73–314 (TKSH…KPLP), 366–957 (SWPP…KPQV), and 1098–1119 (TGTPSPLSPMPSPASSVGSQSS). Composition is skewed to basic and acidic residues over residues 9–35 (NDDRNLLRIREKERRNQEAHQEKEAFP) and 78–87 (HRLDASENRL). 3 positions are modified to phosphoserine: S199, S206, and S212. Polar residues predominate over residues 215-238 (HSNQQTLPRTQGSSKVHGSSNNSK). The residue at position 220 (T220) is a Phosphothreonine. Positions 245–259 (SPKDLAVKVHDKETP) are enriched in basic and acidic residues. A compositionally biased stretch (pro residues) spans 267–279 (AQPPSQTFPPPSL). Residues 394–419 (HVSSVTQNQKQYDTSSKTHSNSQQGT) are compositionally biased toward polar residues. Positions 423-439 (LEDDLQLSDSEDSDSEQ) are enriched in acidic residues. Residues 442-453 (EKPPSSSAPPSA) show a composition bias toward pro residues. The span at 454–472 (PQSLPEPVASAHSSSAESE) shows a compositional bias: low complexity. Positions 473-497 (STSDSDSSSDSESESSSSDSEENEP) are enriched in acidic residues. The span at 536 to 546 (EPPRRHPESKG) shows a compositional bias: basic and acidic residues. A compositionally biased stretch (polar residues) spans 586 to 602 (QKSPAQQEPPQRQTVGT). At S588 the chain carries Phosphoserine. N6-acetyllysine is present on K681. The segment covering 688 to 699 (PAKDNVEDRTPE) has biased composition (basic and acidic residues). T697 bears the Phosphothreonine mark. Positions 707–724 (TESQGPPHSGSGSRTSGC) are enriched in polar residues. The segment covering 732–747 (EDSRKDRLPLPLRDTK) has biased composition (basic and acidic residues). S750 bears the Phosphoserine mark. A Phosphothreonine modification is found at T755. Over residues 816–834 (GEAERDCDNKKIRLEKEIK) the composition is skewed to basic and acidic residues. Residues 871–880 (SSSSQKPAKP) show a composition bias toward low complexity. Residues 906–932 (NHKDSSIPKQRRVEGKGSRSSSEHKGS) are compositionally biased toward basic and acidic residues. Positions 1110–1119 (PASSVGSQSS) are enriched in low complexity.

Belongs to the AF4 family. As to quaternary structure, component of the super elongation complex (SEC), at least composed of EAF1, EAF2, CDK9, MLLT3/AF9, AFF (AFF1 or AFF4), the P-TEFb complex and ELL (ELL, ELL2 or ELL3).

It is found in the nucleus. This Homo sapiens (Human) protein is AF4/FMR2 family member 1 (AFF1).